Consider the following 60-residue polypeptide: Large ribosomal subunit protein bL32 (60 aa).

Residues 1–16 (MAVPRNRHSNARKNIR) show a composition bias toward basic residues. The disordered stretch occupies residues 1–20 (MAVPRNRHSNARKNIRRSHD).

Belongs to the bacterial ribosomal protein bL32 family.

The sequence is that of Large ribosomal subunit protein bL32 (rpmF) from Chlamydia pneumoniae (Chlamydophila pneumoniae).